The sequence spans 20 residues: Transcriptional regulatory protein PufK (20 aa).

A compositionally biased stretch (basic residues) spans Met1–His11. The tract at residues Met1–Gly20 is disordered.

Functionally, involved in the transcriptional regulation of pufB. The polypeptide is Transcriptional regulatory protein PufK (pufK) (Cereibacter sphaeroides (strain ATCC 17023 / DSM 158 / JCM 6121 / CCUG 31486 / LMG 2827 / NBRC 12203 / NCIMB 8253 / ATH 2.4.1.) (Rhodobacter sphaeroides)).